Reading from the N-terminus, the 495-residue chain is UDP-N-acetylmuramoyl-L-alanyl-D-glutamate--2,6-diaminopimelate ligase (495 aa).

Serine 29 lines the UDP-N-acetyl-alpha-D-muramoyl-L-alanyl-D-glutamate pocket. Residue 111–117 (GTNGKTS) coordinates ATP. UDP-N-acetyl-alpha-D-muramoyl-L-alanyl-D-glutamate is bound by residues 153-154 (TT), serine 180, glutamine 186, and arginine 188. An N6-carboxylysine modification is found at lysine 220. Meso-2,6-diaminopimelate-binding positions include arginine 384, 408 to 411 (DNPR), glycine 459, and glutamate 463. The Meso-diaminopimelate recognition motif motif lies at 408-411 (DNPR).

The protein belongs to the MurCDEF family. MurE subfamily. The cofactor is Mg(2+). In terms of processing, carboxylation is probably crucial for Mg(2+) binding and, consequently, for the gamma-phosphate positioning of ATP.

It localises to the cytoplasm. It carries out the reaction UDP-N-acetyl-alpha-D-muramoyl-L-alanyl-D-glutamate + meso-2,6-diaminopimelate + ATP = UDP-N-acetyl-alpha-D-muramoyl-L-alanyl-gamma-D-glutamyl-meso-2,6-diaminopimelate + ADP + phosphate + H(+). Its pathway is cell wall biogenesis; peptidoglycan biosynthesis. Catalyzes the addition of meso-diaminopimelic acid to the nucleotide precursor UDP-N-acetylmuramoyl-L-alanyl-D-glutamate (UMAG) in the biosynthesis of bacterial cell-wall peptidoglycan. This is UDP-N-acetylmuramoyl-L-alanyl-D-glutamate--2,6-diaminopimelate ligase from Xylella fastidiosa (strain Temecula1 / ATCC 700964).